The following is a 193-amino-acid chain: NAD(P)H-quinone oxidoreductase subunit J (193 aa).

The tract at residues 1–21 (MSDSAPTNPTPTNPAPEESAS) is disordered.

This sequence belongs to the complex I 30 kDa subunit family. In terms of assembly, NDH-1 can be composed of about 15 different subunits; different subcomplexes with different compositions have been identified which probably have different functions.

The protein localises to the cellular thylakoid membrane. The enzyme catalyses a plastoquinone + NADH + (n+1) H(+)(in) = a plastoquinol + NAD(+) + n H(+)(out). The catalysed reaction is a plastoquinone + NADPH + (n+1) H(+)(in) = a plastoquinol + NADP(+) + n H(+)(out). NDH-1 shuttles electrons from an unknown electron donor, via FMN and iron-sulfur (Fe-S) centers, to quinones in the respiratory and/or the photosynthetic chain. The immediate electron acceptor for the enzyme in this species is believed to be plastoquinone. Couples the redox reaction to proton translocation, and thus conserves the redox energy in a proton gradient. Cyanobacterial NDH-1 also plays a role in inorganic carbon-concentration. This Synechococcus sp. (strain CC9902) protein is NAD(P)H-quinone oxidoreductase subunit J.